We begin with the raw amino-acid sequence, 310 residues long: Acetylglutamate kinase (310 aa).

Substrate contacts are provided by residues Gly74–Gly75, Arg96, and Asn201.

This sequence belongs to the acetylglutamate kinase family. ArgB subfamily.

The protein resides in the cytoplasm. It catalyses the reaction N-acetyl-L-glutamate + ATP = N-acetyl-L-glutamyl 5-phosphate + ADP. It functions in the pathway amino-acid biosynthesis; L-arginine biosynthesis; N(2)-acetyl-L-ornithine from L-glutamate: step 2/4. In terms of biological role, catalyzes the ATP-dependent phosphorylation of N-acetyl-L-glutamate. In Arthrobacter sp. (strain FB24), this protein is Acetylglutamate kinase.